We begin with the raw amino-acid sequence, 160 residues long: Serine-protein kinase RsbW (160 aa).

This sequence belongs to the anti-sigma-factor family.

It carries out the reaction L-seryl-[protein] + ATP = O-phospho-L-seryl-[protein] + ADP + H(+). The catalysed reaction is L-threonyl-[protein] + ATP = O-phospho-L-threonyl-[protein] + ADP + H(+). Its function is as follows. Negative regulator of sigma-B activity. Phosphorylates and inactivates its specific antagonist protein, RsbV. Upon phosphorylation of RsbV, RsbW is released and binds to sigma-B, thereby blocking its ability to form an RNA polymerase holoenzyme (E-sigma-B). The protein is Serine-protein kinase RsbW of Bacillus thuringiensis (strain Al Hakam).